A 1409-amino-acid polypeptide reads, in one-letter code: Receptor-type tyrosine-protein phosphatase (1409 aa).

The first 22 residues, 1–22 (MRINRWIWWATVILLYLRTGLA), serve as a signal peptide directing secretion. The Extracellular portion of the chain corresponds to 23–712 (ADFFRSSEEN…LLDTESSSSG (690 aa)). The interval 32-53 (NDRKSSDDLDNFNSTKIEPDKP) is disordered. In terms of domain architecture, Ig-like C2-type spans 159 to 267 (PTKCDKRDLA…TASASDLDVT (109 aa)). Cysteines 189 and 255 form a disulfide. Fibronectin type-III domains lie at 276-366 (APRQ…TKQK) and 372-502 (KEED…AQPD). The helical transmembrane segment at 713–733 (FGIFMKIILPFLLFLAFATGV) threads the bilayer. Residues 734–1409 (TMFFVNRKGH…LADYISKTYR (676 aa)) lie on the Cytoplasmic side of the membrane. Tyrosine-protein phosphatase domains lie at 793-1072 (FAQE…LAEW) and 1135-1403 (LEEE…LADY). Residues Cys-1013 and Cys-1344 each act as phosphocysteine intermediate in the active site.

This sequence belongs to the protein-tyrosine phosphatase family. Receptor class 2A subfamily. Expressed in muscles, hypodermis and a subset of neurons. Expressed in the AVA neurons, with high expression in the anterior half of the preanal ganglion where AVA neurons contact the PHB neurons.

The protein localises to the cell membrane. It localises to the synapse. It carries out the reaction O-phospho-L-tyrosyl-[protein] + H2O = L-tyrosyl-[protein] + phosphate. Possesses an intrinsic protein tyrosine phosphatase (PTPase) activity. Regulates egl-15 activity which is required for hypodermis-mediated fluid homeostasis and protein degradation in muscle. During the formation of neuromuscular junctions at the larval stage, negatively regulates membrane protrusion from body wall muscles. Plays a role in nicotinic acetylcholine receptor (nAChR)-mediated sensitivity to nicotine. Regulates synaptic levels of nAchR subunit lev-1 in the nerve cord. Promotes the outgrowth of the quaternary dendritic branches of the PVD sensory neurons. In parallel to the sax-7/mnr-1 pathway, also controls the extension of the PVD primary branches. Acts in the netrin/DCC pathway to mediate the formation of synapses between the AVA interneurons and the PHB sensory neurons. Also required for the formation of synapses between the AVA interneurons and the VA10 motor neurons. The chain is Receptor-type tyrosine-protein phosphatase from Caenorhabditis elegans.